Consider the following 382-residue polypeptide: Succinyl-diaminopimelate desuccinylase (382 aa).

Zn(2+) is bound at residue His-68. Asp-70 is an active-site residue. Asp-101 is a binding site for Zn(2+). The active-site Proton acceptor is Glu-135. Zn(2+) is bound by residues Glu-136, Glu-164, and His-350.

Belongs to the peptidase M20A family. DapE subfamily. Homodimer. Requires Zn(2+) as cofactor. Co(2+) is required as a cofactor.

The catalysed reaction is N-succinyl-(2S,6S)-2,6-diaminopimelate + H2O = (2S,6S)-2,6-diaminopimelate + succinate. It participates in amino-acid biosynthesis; L-lysine biosynthesis via DAP pathway; LL-2,6-diaminopimelate from (S)-tetrahydrodipicolinate (succinylase route): step 3/3. In terms of biological role, catalyzes the hydrolysis of N-succinyl-L,L-diaminopimelic acid (SDAP), forming succinate and LL-2,6-diaminopimelate (DAP), an intermediate involved in the bacterial biosynthesis of lysine and meso-diaminopimelic acid, an essential component of bacterial cell walls. This is Succinyl-diaminopimelate desuccinylase from Acidithiobacillus ferrooxidans (strain ATCC 23270 / DSM 14882 / CIP 104768 / NCIMB 8455) (Ferrobacillus ferrooxidans (strain ATCC 23270)).